The following is a 409-amino-acid chain: Broad specificity amino-acid racemase (409 aa).

An N-terminal signal peptide occupies residues 1-24 (MPFRRTLLAASLVLLITGQAPLYA). Residues C71 and C97 are joined by a disulfide bond. The active-site Proton acceptor is the K75. The residue at position 75 (K75) is an N6-(pyridoxal phosphate)lysine. R174 lines the substrate pocket. The Proton acceptor role is filled by Y301. M349 contributes to the substrate binding site.

The protein belongs to the alanine racemase family. Bsr subfamily. In terms of assembly, monomer. Forms a head-to-tail homodimer in the structure. Pyridoxal 5'-phosphate is required as a cofactor.

The protein resides in the periplasm. The enzyme catalyses an L-alpha-amino acid = a D-alpha-amino acid. It catalyses the reaction L-lysine = D-lysine. It carries out the reaction L-arginine = D-arginine. The catalysed reaction is L-alanine = D-alanine. Activity is enhanced by Co(2+), Mn(2+) and Sr(2+), and decreased by Cu(2+). Amino-acid racemase that catalyzes the interconversion of L-lysine and D-lysine, and L-arginine and D-arginine. To a lesser extent, is also able to interconvert alanine and isoleucine enantiomers. In Pseudomonas putida (Arthrobacter siderocapsulatus), this protein is Broad specificity amino-acid racemase.